The sequence spans 348 residues: Dihydroorotase (348 aa).

2 residues coordinate Zn(2+): His-17 and His-19. Substrate contacts are provided by residues 19–21 (HLR) and Asn-45. Zn(2+) contacts are provided by Lys-103, His-140, and His-178. N6-carboxylysine is present on Lys-103. His-140 serves as a coordination point for substrate. Residue Leu-223 participates in substrate binding. Residue Asp-251 coordinates Zn(2+). Asp-251 is an active-site residue. 2 residues coordinate substrate: His-255 and Ala-267.

Belongs to the metallo-dependent hydrolases superfamily. DHOase family. Class II DHOase subfamily. In terms of assembly, homodimer. Requires Zn(2+) as cofactor.

It catalyses the reaction (S)-dihydroorotate + H2O = N-carbamoyl-L-aspartate + H(+). The protein operates within pyrimidine metabolism; UMP biosynthesis via de novo pathway; (S)-dihydroorotate from bicarbonate: step 3/3. Catalyzes the reversible cyclization of carbamoyl aspartate to dihydroorotate. The polypeptide is Dihydroorotase (Cronobacter sakazakii (strain ATCC BAA-894) (Enterobacter sakazakii)).